Reading from the N-terminus, the 808-residue chain is DNA gyrase subunit B (808 aa).

The region spanning 429–544 is the Toprim domain; that stretch reads SELFIVEGDS…KGYLYIAQPP (116 aa). Mg(2+) is bound by residues Glu435, Asp509, and Asp511.

It belongs to the type II topoisomerase GyrB family. As to quaternary structure, heterotetramer, composed of two GyrA and two GyrB chains. In the heterotetramer, GyrA contains the active site tyrosine that forms a transient covalent intermediate with DNA, while GyrB binds cofactors and catalyzes ATP hydrolysis. Mg(2+) is required as a cofactor. Mn(2+) serves as cofactor. It depends on Ca(2+) as a cofactor.

It is found in the cytoplasm. It carries out the reaction ATP-dependent breakage, passage and rejoining of double-stranded DNA.. A type II topoisomerase that negatively supercoils closed circular double-stranded (ds) DNA in an ATP-dependent manner to modulate DNA topology and maintain chromosomes in an underwound state. Negative supercoiling favors strand separation, and DNA replication, transcription, recombination and repair, all of which involve strand separation. Also able to catalyze the interconversion of other topological isomers of dsDNA rings, including catenanes and knotted rings. Type II topoisomerases break and join 2 DNA strands simultaneously in an ATP-dependent manner. The chain is DNA gyrase subunit B from Rickettsia felis (strain ATCC VR-1525 / URRWXCal2) (Rickettsia azadi).